A 262-amino-acid polypeptide reads, in one-letter code: Snake venom serine proteinase 1 (262 aa).

An N-terminal signal peptide occupies residues Met1–Ala18. A propeptide spanning residues Gln19–Leu24 is cleaved from the precursor. The region spanning Val25–Ala253 is the Peptidase S1 domain. 5 disulfide bridges follow: Cys31–Cys165, Cys52–Cys68, Cys144–Cys214, Cys176–Cys193, and Cys204–Cys229. His67 serves as the catalytic Charge relay system. An N-linked (GlcNAc...) asparagine glycan is attached at Asn105. The active-site Charge relay system is Asp112. The active-site Charge relay system is Ser208.

Belongs to the peptidase S1 family. Snake venom subfamily. Monomer. As to expression, expressed by the venom gland.

It is found in the secreted. Its function is as follows. Snake venom serine protease that may act in the hemostasis system of the prey. In Crotalus adamanteus (Eastern diamondback rattlesnake), this protein is Snake venom serine proteinase 1.